The following is an 824-amino-acid chain: Intraflagellar transport protein 88 homolog (824 aa).

Positions 113 to 134 (FDPLSQSRGPASPLEAKKKDSP) are disordered. TPR repeat units lie at residues 197 to 230 (YSVL…KMFS), 233 to 266 (GILK…VPSV), 272 to 305 (IKIM…APNL), 307 to 338 (AGYN…PLEI), 415 to 448 (NDLE…DSRV), 450 to 483 (SAAA…DRYN), 484 to 517 (PAAL…DSSC), 518 to 551 (TEAL…LRNS), 552 to 585 (AEVL…IPTD), 586 to 619 (PQVL…FPCN), 620 to 653 (IEVI…QPTQ), and 654 to 687 (VKWQ…FPEN). The disordered stretch occupies residues 724-824 (EQRIKSGRDG…EELGDDLLPE (101 aa)). The segment covering 748-757 (DSGQNYSASS) has biased composition (polar residues). Basic and acidic residues predominate over residues 797–808 (ERPKTAAKKRID). Positions 809–824 (EDDFADEELGDDLLPE) are enriched in acidic residues.

In terms of assembly, component of the IFT complex B, at least composed of IFT20, IFT22, IFT25, IFT27, IFT46, IFT52, TRAF3IP1/IFT54, IFT57, IFT74, IFT80, IFT81, and IFT88. Interacts with IFT20, IFT22, IFT25, IFT27, IFT52, TRAF3IP1, IFT74, IFT80 and IFT81. Interacts with IFT172. Interacts with IFT57. Interacts with IFT46. Interacts with IFT70B. Interacts with C2CD3. Interacts with ENTR1 (via N-terminus). Interacts with LRRC56. Interacts with DZIP1. Interacts with CCDC38. Interacts with CCDC146. Interacts with CFAP53. As to expression, expressed in the heart, brain, liver, lung, kidney, skeletal muscle and pancreas.

Its subcellular location is the cytoplasm. It is found in the cytoskeleton. The protein resides in the microtubule organizing center. The protein localises to the centrosome. It localises to the centriole. Its subcellular location is the cell projection. It is found in the cilium. The protein resides in the cilium basal body. The protein localises to the flagellum. Its function is as follows. Positively regulates primary cilium biogenesis. Also involved in autophagy since it is required for trafficking of ATG16L and the expansion of the autophagic compartment. The protein is Intraflagellar transport protein 88 homolog (IFT88) of Homo sapiens (Human).